The chain runs to 256 residues: Small ribosomal subunit protein eS1 (256 aa).

A compositionally biased stretch (basic residues) spans 1 to 18; it reads MAVGKNKRLSKGKKGVKK. The interval 1–20 is disordered; that stretch reads MAVGKNKRLSKGKKGVKKRT. Residue Ala2 is modified to N-acetylalanine; partial.

The protein belongs to the eukaryotic ribosomal protein eS1 family. As to quaternary structure, component of the small ribosomal subunit. Mature ribosomes consist of a small (40S) and a large (60S) subunit. The 40S subunit contains about 33 different proteins and 1 molecule of RNA (18S). The 60S subunit contains about 49 different proteins and 3 molecules of RNA (25S, 5.8S and 5S).

The protein resides in the cytoplasm. The protein is Small ribosomal subunit protein eS1 (rps1) of Aspergillus clavatus (strain ATCC 1007 / CBS 513.65 / DSM 816 / NCTC 3887 / NRRL 1 / QM 1276 / 107).